The sequence spans 241 residues: Probable transcriptional regulator PhnF (241 aa).

The region spanning 11 to 78 (PTRYQEIAAK…QGVGVLVLMR (68 aa)) is the HTH gntR-type domain. The segment at residues 38-57 (EQQLAARFEVNRHTLRRAID) is a DNA-binding region (H-T-H motif).

Its function is as follows. Belongs to an operon involved in alkylphosphonate uptake and C-P lyase. Exact function not known. By similarity could be a transcriptional regulator. The polypeptide is Probable transcriptional regulator PhnF (phnF) (Escherichia coli (strain K12)).